Here is a 585-residue protein sequence, read N- to C-terminus: Arginine--tRNA ligase (585 aa).

Residues 126–136 (PNIAKEMHVGH) carry the 'HIGH' region motif.

The protein belongs to the class-I aminoacyl-tRNA synthetase family. As to quaternary structure, monomer.

It is found in the cytoplasm. It catalyses the reaction tRNA(Arg) + L-arginine + ATP = L-arginyl-tRNA(Arg) + AMP + diphosphate. This chain is Arginine--tRNA ligase, found in Cyanothece sp. (strain PCC 7425 / ATCC 29141).